The chain runs to 268 residues: Esterase PIR7B (268 aa).

S86 functions as the Acyl-ester intermediate in the catalytic mechanism. Residues D218 and H246 each act as charge relay system in the active site.

Belongs to the AB hydrolase superfamily.

Its function is as follows. Exhibits esterase activity towards naphthol AS-acetate in vitro. This chain is Esterase PIR7B (PIR7B), found in Oryza sativa subsp. japonica (Rice).